A 1118-amino-acid polypeptide reads, in one-letter code: Error-prone DNA polymerase (1118 aa).

The interval 1071–1118 is disordered; sequence GPQPMGYAKEVGSDRRSRPEIGNAPARQDLATLSEEAEQVMPKGRNFQ.

Belongs to the DNA polymerase type-C family. DnaE2 subfamily.

Its subcellular location is the cytoplasm. It catalyses the reaction DNA(n) + a 2'-deoxyribonucleoside 5'-triphosphate = DNA(n+1) + diphosphate. Its function is as follows. DNA polymerase involved in damage-induced mutagenesis and translesion synthesis (TLS). It is not the major replicative DNA polymerase. This is Error-prone DNA polymerase from Mesorhizobium japonicum (strain LMG 29417 / CECT 9101 / MAFF 303099) (Mesorhizobium loti (strain MAFF 303099)).